Reading from the N-terminus, the 314-residue chain is Olfactory receptor 9I1 (314 aa).

Residues 1–25 lie on the Extracellular side of the membrane; the sequence is MAKNNLTRVTEFILMGFMDHPKLEI. A glycan (N-linked (GlcNAc...) asparagine) is linked at N5. A helical transmembrane segment spans residues 26–46; it reads PLFLVFLSFYLVTLLGNVGMI. Residues 47–54 are Cytoplasmic-facing; it reads MLIQVDVK. A helical transmembrane segment spans residues 55–75; it reads LYTPMYFFLSHLSLLDACYTS. Residues 76–99 lie on the Extracellular side of the membrane; that stretch reads VITPQILATLATGKTVISYGHCAA. Residues C97 and C189 are joined by a disulfide bond. The chain crosses the membrane as a helical span at residues 100–120; it reads QFFLFTICAGTECFLLAVMAY. The Cytoplasmic portion of the chain corresponds to 121–139; that stretch reads DRYAAIRNPLLYTVAMNPR. A helical transmembrane segment spans residues 140–160; the sequence is LCWSLVVGAYVCGVSGAILRT. Residues 161–197 lie on the Extracellular side of the membrane; sequence TCTFTLSFCKDNQINFFFCDLPPLLKLACSDTANIEI. A helical membrane pass occupies residues 198-217; sequence VIIFFGNFVILANASVILIS. At 218-237 the chain is on the cytoplasmic side; it reads YLLIIKTILKVKSSGGRAKT. A helical membrane pass occupies residues 238 to 258; sequence FSTCASHITAVALFFGALIFM. At 259 to 271 the chain is on the extracellular side; it reads YLQSGSGKSLEED. The helical transmembrane segment at 272-292 threads the bilayer; sequence KVVSVFYTVVIPMLNPLIYSL. The Cytoplasmic portion of the chain corresponds to 293-314; it reads RNKDVKDAFRKVARRLQVSLSM.

The protein belongs to the G-protein coupled receptor 1 family.

The protein resides in the cell membrane. Its function is as follows. Odorant receptor. This is Olfactory receptor 9I1 (OR9I1) from Homo sapiens (Human).